The following is a 1159-amino-acid chain: CRISPR-associated endoribonuclease Cas13a (1159 aa).

The binds crRNA repeat and spacer stretch occupies residues 1–11; sequence MKVTKVGGISH. The tract at residues 1–170 is NTD; sequence MKVTKVGGIS…NNIEKVEGKS (170 aa). 6 binds crRNA repeat regions span residues 139-151, 172-176, 224-233, 271-276, 294-297, and 301-305; these read NKIN…FEKN, RNIIY, REFYHEIIGR, QVFYKY, HFVE, and SQLLK. The segment at 171–360 is helical-1; that stretch reads KRNIIYDYYR…YNYYLQDGEI (190 aa). The binds crRNA processing site stretch occupies residues 319–328; that stretch reads KIKRIFEYQN. Binds crRNA repeat stretches follow at residues 336-340 and 371-378; these read KLLNK and QNEAFLRN. The segment at 361 to 508 is HEPN-like fold 1-I; sequence ATSDFIARNR…SKKMFQNEIN (148 aa). Active-site for target RNA cleavage residues include Arg-472 and His-477. Residues 509–751 are helical-2; the sequence is EKKLKLKIFR…EFLREIKLGN (243 aa). Residues 519-522 form a binds target RNA region; it reads QLNS. The binds crRNA spacer stretch occupies residues 547–558; the sequence is NKNIPFVPSFTK. Residues 590–597 form a binds target RNA region; the sequence is DAQIYLLK. The binds crRNA spacer stretch occupies residues 718-722; the sequence is KQEFD. Residues 752–813 are HEPN-like fold 1-II; that stretch reads ILKYTERLNM…NLDNNRVTED (62 aa). The segment at 780-783 is binds crRNA repeat; sequence SLEK. The tract at residues 804-810 is binds crRNA spacer and target RNA; it reads NLDNNRV. Positions 814–946 are linker; that stretch reads FELEADEIGK…EYTHLKNKVE (133 aa). 2 binds crRNA spacer regions span residues 845–857 and 938–942; these read KIYF…IKHR and YTHLK. Residues 880 to 946 adopt a coiled-coil conformation; that stretch reads YKISIEELKK…EYTHLKNKVE (67 aa). The segment at 947 to 1159 is HEPN-like fold 2; the sequence is FNELNLLQGL…YKMEEKKSEN (213 aa). The binds crRNA repeat stretch occupies residues 962–963; it reads HR. Positions 995 to 998 are binds 3'-end of target RNA, in adjacent protein; sequence FENK. Catalysis depends on for target RNA cleavage residues Arg-1048 and His-1053. 2 binds crRNA processing site regions span residues 1072–1082 and 1104–1108; these read RKLLSYDRKLK and IGADK.

It belongs to the CRISPR-associated endoribonuclease Cas13a family. In terms of assembly, crystals show the 3'-end of target RNA interacting with an adjacent protein molecule, and mutagenesis of those amino acid residues decreases target RNA cleavage, but it is not clear if this is physiological. A divalent metal cation serves as cofactor.

Its activity is regulated as follows. Target RNA acts as an activator for non-specific ssRNA cleavage; the target RNA and complementary crRNA must both be at least 20 nucleotides long to activate the HEPN-like catalytic pocket for RNase activity. In terms of biological role, CRISPR (clustered regularly interspaced short palindromic repeat), is an adaptive immune system that provides protection against mobile genetic elements (viruses, transposable elements and conjugative plasmids). CRISPR clusters contain sequences complementary to antecedent mobile elements (spacer sequences) and target invading nucleic acids. Unlike many single-component effectors, this CRISPR-Cas system targets RNA. CRISPR clusters are transcribed from pre-CRISPR RNA (crRNA) and processed into crRNA by this protein. pre-crRNA processing yields a 5'-OH and probably a 2',3'-cyclic phosphate. Also cleaves pre-crRNA from several other type VI-A CRISPR systems. Cleaves linear target ssRNA in a crRNA-dependent fashion, preferentially before U residues. Cleavage of target ssRNA is about 80-fold faster than pre-crRNA processing and uses a different active site. Binding a viable target RNA target activates this protein for non-specific RNA degradation in vitro (called collateral RNA degradation). Activation occurs with 10 fM target RNA. crRNA maturation is not essential for activation of RNA degradation, but lack of mature crRNA (due to mutagenesis) decreases activation levels. This system has a 3' protospacer flanking site in the target RNA (PFS), which is C and unavailable to base pair with crRNA (PFS is equivalent to PAM, the protospacer adjacent motif). This Leptotrichia buccalis (strain ATCC 14201 / DSM 1135 / JCM 12969 / NCTC 10249 / C-1013-b) protein is CRISPR-associated endoribonuclease Cas13a.